Reading from the N-terminus, the 397-residue chain is Acetate kinase (397 aa).

Asn8 is a Mg(2+) binding site. Lys15 is a binding site for ATP. Arg92 is a substrate binding site. Asp149 serves as the catalytic Proton donor/acceptor. ATP is bound by residues 209 to 213 (HLGNG), 283 to 285 (DFR), and 331 to 335 (GVGEN). Glu385 contributes to the Mg(2+) binding site.

This sequence belongs to the acetokinase family. As to quaternary structure, homodimer. It depends on Mg(2+) as a cofactor. Requires Mn(2+) as cofactor.

Its subcellular location is the cytoplasm. The catalysed reaction is acetate + ATP = acetyl phosphate + ADP. It functions in the pathway metabolic intermediate biosynthesis; acetyl-CoA biosynthesis; acetyl-CoA from acetate: step 1/2. Functionally, catalyzes the formation of acetyl phosphate from acetate and ATP. Can also catalyze the reverse reaction. The sequence is that of Acetate kinase from Corynebacterium glutamicum (strain ATCC 13032 / DSM 20300 / JCM 1318 / BCRC 11384 / CCUG 27702 / LMG 3730 / NBRC 12168 / NCIMB 10025 / NRRL B-2784 / 534).